A 33-amino-acid polypeptide reads, in one-letter code: Gastrin (33 aa).

Residues glutamate 1–tryptophan 21 are disordered. At glutamine 18 the chain carries Pyrrolidone carboxylic acid. Sulfotyrosine is present on tyrosine 28. Phenylalanine 33 carries the phenylalanine amide modification.

Belongs to the gastrin/cholecystokinin family.

The protein resides in the secreted. Its function is as follows. Gastrin stimulates the stomach mucosa to produce and secrete hydrochloric acid and the pancreas to secrete its digestive enzymes. It also stimulates smooth muscle contraction and increases blood circulation and water secretion in the stomach and intestine. The polypeptide is Gastrin (GAST) (Chinchilla chinchilla (Short-tailed chinchilla)).